Consider the following 662-residue polypeptide: Junctophilin-1 (662 aa).

At 1-640 (MTGGRFDFDD…EREANSGPNS (640 aa)) the chain is on the cytoplasmic side. 5 MORN repeats span residues 14–36 (YCGGWEEGKAHGHGICTGPKGQG), 38–59 (YSGSWSHGFEVVGGYTWPSGNT), 60–82 (YQGYWAQGKRHGLGVETKGKWMY), 106–128 (YEGTWSNGLQDGYGVETYGDGGT), and 129–151 (YQGQWAGGMRHGYGVRQSVPYGM). Phosphoserine occurs at positions 157, 216, and 220. The tract at residues 228 to 247 (SKSSISSKRSSVRSDAAMSR) is disordered. MORN repeat units lie at residues 281-303 (YMGEWKNDKRNGFGISERSNGMK) and 304-326 (YEGEWANNKRHGYGCTVFPDGSK). The segment covering 432–443 (VDAKENPEEKVP) has biased composition (basic and acidic residues). The disordered stretch occupies residues 432–634 (VDAKENPEEK…DSCPSMEREA (203 aa)). Thr448 carries the post-translational modification Phosphothreonine. Ser452 carries the phosphoserine modification. Thr461 is subject to Phosphothreonine. Phosphoserine occurs at positions 465, 469, and 475. Residues 584 to 599 (KPSPNKWSPPKSVTKP) are compositionally biased toward low complexity. The segment covering 600–614 (VAKESKAEPKAKKSE) has biased composition (basic and acidic residues). A helical; Anchor for type IV membrane protein transmembrane segment spans residues 641–661 (VMIVLVMLLNIGLAILFVHFL).

It belongs to the junctophilin family.

Its subcellular location is the cell membrane. The protein localises to the endoplasmic reticulum membrane. The protein resides in the sarcoplasmic reticulum membrane. Functionally, junctophilins contribute to the formation of junctional membrane complexes (JMCs) which link the plasma membrane with the endoplasmic or sarcoplasmic reticulum in excitable cells. Provides a structural foundation for functional cross-talk between the cell surface and intracellular calcium release channels. JPH1 contributes to the construction of the skeletal muscle triad by linking the t-tubule (transverse-tubule) and SR (sarcoplasmic reticulum) membranes. The polypeptide is Junctophilin-1 (JPH1) (Oryctolagus cuniculus (Rabbit)).